The following is a 449-amino-acid chain: tRNA modification GTPase MnmE (449 aa).

Residues R24, E81, and K121 each coordinate (6S)-5-formyl-5,6,7,8-tetrahydrofolate. Residues 218 to 375 form the TrmE-type G domain; that stretch reads GLVVAITGPP…LIAALGKFAA (158 aa). GTP-binding positions include 228–233, 247–253, and 272–275; these read NVGKST, SPHAGTT, and DTAG. Mg(2+) contacts are provided by S232 and T253. K449 serves as a coordination point for (6S)-5-formyl-5,6,7,8-tetrahydrofolate.

The protein belongs to the TRAFAC class TrmE-Era-EngA-EngB-Septin-like GTPase superfamily. TrmE GTPase family. Homodimer. Heterotetramer of two MnmE and two MnmG subunits. It depends on K(+) as a cofactor.

It localises to the cytoplasm. Functionally, exhibits a very high intrinsic GTPase hydrolysis rate. Involved in the addition of a carboxymethylaminomethyl (cmnm) group at the wobble position (U34) of certain tRNAs, forming tRNA-cmnm(5)s(2)U34. This is tRNA modification GTPase MnmE from Rhodopseudomonas palustris (strain BisB18).